The primary structure comprises 454 residues: Phosphoglucosamine mutase (454 aa).

The active-site Phosphoserine intermediate is serine 101. Mg(2+) is bound by residues serine 101, aspartate 243, aspartate 245, and aspartate 247. A Phosphoserine modification is found at serine 101.

It belongs to the phosphohexose mutase family. Mg(2+) is required as a cofactor. Activated by phosphorylation.

It catalyses the reaction alpha-D-glucosamine 1-phosphate = D-glucosamine 6-phosphate. Catalyzes the conversion of glucosamine-6-phosphate to glucosamine-1-phosphate. The protein is Phosphoglucosamine mutase of Geotalea uraniireducens (strain Rf4) (Geobacter uraniireducens).